The sequence spans 338 residues: Putative acyl-[acyl-carrier-protein] desaturase DesA1 (338 aa).

Fe cation-binding residues include E76, E107, H110, E167, E197, and H200. The span at 314–328 (EARTGKKVSAHELHK) shows a compositional bias: basic and acidic residues. The segment at 314-338 (EARTGKKVSAHELHKTAGKLAMSRR) is disordered.

Belongs to the fatty acid desaturase type 2 family. Homodimer. Requires Fe(2+) as cofactor.

It is found in the cell surface. It participates in lipid metabolism; fatty acid metabolism. Functionally, may be a desaturase involved in mycobacterial fatty acid biosynthesis. The polypeptide is Putative acyl-[acyl-carrier-protein] desaturase DesA1 (desA1) (Mycobacterium tuberculosis (strain CDC 1551 / Oshkosh)).